The following is a 280-amino-acid chain: Energy-coupling factor transporter ATP-binding protein EcfA2 (280 aa).

The ABC transporter domain occupies 3-245 (INLQNVSYTY…VSLLEKKQLG (243 aa)). Residue 40–47 (GHTGSGKS) coordinates ATP.

It belongs to the ABC transporter superfamily. Energy-coupling factor EcfA family. As to quaternary structure, forms a stable energy-coupling factor (ECF) transporter complex composed of 2 membrane-embedded substrate-binding proteins (S component), 2 ATP-binding proteins (A component) and 2 transmembrane proteins (T component).

Its subcellular location is the cell membrane. Functionally, ATP-binding (A) component of a common energy-coupling factor (ECF) ABC-transporter complex. Unlike classic ABC transporters this ECF transporter provides the energy necessary to transport a number of different substrates. This Streptococcus pyogenes serotype M28 (strain MGAS6180) protein is Energy-coupling factor transporter ATP-binding protein EcfA2.